The sequence spans 150 residues: Actin-related protein 2/3 complex subunit 5-C (150 aa).

The segment at 21 to 45 (NKFVDEEEAGEGQQGPDEGEVDSAI) is disordered.

It belongs to the ARPC5 family. Component of the Arp2/3 complex composed of actr2/arp2, actr3/arp3, arpc1 (arpc1a or arpc1b), arpc2, arpc3, arpc4 and arpc5.

It is found in the cytoplasm. It localises to the cytoskeleton. Its subcellular location is the cell projection. The protein resides in the nucleus. Functionally, component of the Arp2/3 complex, a multiprotein complex that mediates actin polymerization upon stimulation by nucleation-promoting factor (NPF). The Arp2/3 complex mediates the formation of branched actin networks in the cytoplasm, providing the force for cell motility. In addition to its role in the cytoplasmic cytoskeleton, the Arp2/3 complex also promotes actin polymerization in the nucleus, thereby regulating gene transcription and repair of damaged DNA. The Arp2/3 complex promotes homologous recombination (HR) repair in response to DNA damage by promoting nuclear actin polymerization, leading to drive motility of double-strand breaks (DSBs). This chain is Actin-related protein 2/3 complex subunit 5-C (arpc5-c), found in Xenopus laevis (African clawed frog).